The primary structure comprises 156 residues: Ribosome maturation factor RimP (156 aa).

The protein belongs to the RimP family.

It localises to the cytoplasm. Required for maturation of 30S ribosomal subunits. This Fusobacterium nucleatum subsp. nucleatum (strain ATCC 25586 / DSM 15643 / BCRC 10681 / CIP 101130 / JCM 8532 / KCTC 2640 / LMG 13131 / VPI 4355) protein is Ribosome maturation factor RimP.